The sequence spans 467 residues: Histidine--tRNA ligase (467 aa).

This sequence belongs to the class-II aminoacyl-tRNA synthetase family. As to quaternary structure, homodimer.

The protein resides in the cytoplasm. The catalysed reaction is tRNA(His) + L-histidine + ATP = L-histidyl-tRNA(His) + AMP + diphosphate + H(+). The sequence is that of Histidine--tRNA ligase from Gloeobacter violaceus (strain ATCC 29082 / PCC 7421).